A 371-amino-acid polypeptide reads, in one-letter code: MAHTVSLVAPRRQTRPVQVGSVQVGGDAPISVQSMTNTDTRDLPATLAQIHAIAQAGADLVRVSCPDMASAEAVKALVAQAPVPLIADIHFDHRLALKALACGIHCLRINPGNIGSTARVQEVVAAARERCVPIRIGVNAGSLEKQLLEKYGEPCAEAMVESALHHIHILEDLNYPEIKVSLKASDVGMTVMAYRQLASKVNYPLHLGITEAGGMRSGSVKSAIGLGLLLAEGIGDTLRVSLSADPVEEIKVGFDILKSLGLRSLGVNIIACPTCARQEFKVIDVVAELERRLAHIREPVTLSIIGCVVNGPGEAKETMVGVVGGQGENLLYQHGQTIGKRGDAELVETVVEQVEAIAQQMRAAKEKAEAE.

[4Fe-4S] cluster is bound by residues Cys-272, Cys-275, Cys-307, and Glu-314.

It belongs to the IspG family. [4Fe-4S] cluster serves as cofactor.

The enzyme catalyses (2E)-4-hydroxy-3-methylbut-2-enyl diphosphate + oxidized [flavodoxin] + H2O + 2 H(+) = 2-C-methyl-D-erythritol 2,4-cyclic diphosphate + reduced [flavodoxin]. Its pathway is isoprenoid biosynthesis; isopentenyl diphosphate biosynthesis via DXP pathway; isopentenyl diphosphate from 1-deoxy-D-xylulose 5-phosphate: step 5/6. Its function is as follows. Converts 2C-methyl-D-erythritol 2,4-cyclodiphosphate (ME-2,4cPP) into 1-hydroxy-2-methyl-2-(E)-butenyl 4-diphosphate. This is 4-hydroxy-3-methylbut-2-en-1-yl diphosphate synthase (flavodoxin) from Magnetococcus marinus (strain ATCC BAA-1437 / JCM 17883 / MC-1).